Here is a 166-residue protein sequence, read N- to C-terminus: Salivary acidic proline-rich phosphoprotein 1/2 (166 aa).

An N-terminal signal peptide occupies residues 1–16; sequence MLLILLSVALLAFSSA. The disordered stretch occupies residues 16–166; sequence AQDLDEDVSQ…QGPPQGQSPQ (151 aa). Gln-17 carries the post-translational modification Pyrrolidone carboxylic acid. The segment at 17–46 is inhibits hydroxyapatite formation, binds to hydroxyapatite and calcium; the sequence is QDLDEDVSQEDVPLVISDGGDSEQFIDEER. Residue Ser-24 is modified to Phosphoserine; by FAM20C. The residue at position 33 (Ser-33) is a Phosphoserine; alternate. Ser-33 and Ser-38 each carry an O-linked (GlcA) serine; alternate glycan. Position 38 is a phosphoserine; by FAM20C; alternate (Ser-38). Low complexity-rich tracts occupy residues 48–61 and 68–82; these read GPPL…PSAG and GPQQ…QQQQ. Composition is skewed to pro residues over residues 83-111 and 137-159; these read GPPP…PQGP.

Proteolytically cleaved; PRP-2, PRP-1, PIF-S and Db-S yield PRP-4, PRP-3 (protein A), PIF-F and Db-F, respectively. Post-translationally, a hexuronic acid was shown to be linked to Ser-33 in about 40% of the polypeptides. Neither the structure of the carbohydrate (whether glucuronic acid or an isomer of), nor the linkage (whether a glycoside or an ester) has been definitely established.

It is found in the secreted. Functionally, PRP's act as highly potent inhibitors of crystal growth of calcium phosphates. They provide a protective and reparative environment for dental enamel which is important for the integrity of the teeth. This is Salivary acidic proline-rich phosphoprotein 1/2 (PRH1) from Homo sapiens (Human).